The primary structure comprises 572 residues: Flagellin B (572 aa).

It belongs to the bacterial flagellin family. Heteromer of flaA and flaB.

Its subcellular location is the secreted. The protein resides in the bacterial flagellum. Its function is as follows. Flagellin is the subunit protein which polymerizes to form the filaments of bacterial flagella. The polypeptide is Flagellin B (flaB) (Campylobacter jejuni subsp. jejuni serotype O:2 (strain ATCC 700819 / NCTC 11168)).